The primary structure comprises 402 residues: Beta-peptidyl aminopeptidase BapA (402 aa).

Positions 1 to 29 (MTSTQRLWSGALPLLTALIVSIAATASLA) are cleaved as a signal peptide. Ser279 acts as the Nucleophile in catalysis. Residues Ser317 and Glu319 each act as proton donor/acceptor in the active site.

It belongs to the peptidase S58 family. Heterooctamer of 4 heterodimers ((alpha:beta)4); each heterodimer is composed of an alpha subunit and a beta subunit processed from the same precursor. Autoproteolytic processing to generate the alpha and beta subunit is required for self-activation and is proposed to use a similar mechanism as substrate cleavage.

Its subcellular location is the periplasm. It catalyses the reaction Cleaves N-terminal beta-homoamino acids from peptides composed of 2 to 6 amino acids.. With respect to regulation, inhibited by AEBSF (4-(2-aminoethyl)benzenesulfonyl fluoride, Pefabloc SC), ampicillin and AMP(hyd) (ampillicin-derived penicilloic acid). In terms of biological role, beta-aminopeptidase that can cleave synthetic beta-peptides which consist of backbone-elongated beta-amino acid residues that are not processed by common proteolytic enzymes. Can cleave the beta-peptides beta-homoVal-beta-homoAla-beta-homoLeu and beta-homoAla-beta-homoLeu. Requires a beta-amino acid at the N-terminus of peptide substrates and cleaves the peptide bond between the N-terminal beta-amino acid and the amino acid at the second position of tripeptidic substrates of the general structure H-betahXaa-Ile-betahTyr-OH according to the following preferences with regard to the side chain of the N-terminal beta-amino acid: aliphatic and aromatic &gt; OH-containing &gt; hydrogen, basic and polar. This is Beta-peptidyl aminopeptidase BapA from Sphingosinicella xenopeptidilytica.